Here is a 721-residue protein sequence, read N- to C-terminus: Long-chain-fatty-acid--CoA ligase ACSBG1 (721 aa).

The tract at residues 1–64 is disordered; the sequence is MPRGSEAGYC…SHGLELSAPE (64 aa). The span at 26 to 52 shows a compositional bias: polar residues; it reads QQGASLGTSQDNSQTSSLIDGQTLSKE. Ser-34, Ser-50, Ser-53, and Ser-70 each carry phosphoserine. Residues 279-287, 469-474, Asp-547, and Arg-562 contribute to the ATP site; these read TSGTTGNPK and AGYGLS. Phosphotyrosine is present on Tyr-655. ATP is bound at residue Lys-698.

Belongs to the ATP-dependent AMP-binding enzyme family. Bubblegum subfamily. In terms of tissue distribution, mainly expressed in brain. Also expressed in adrenal gland and testis. In brain, it is present in cerebral cortical and cerebellar neurons and in steroidogenic cells of the adrenal gland, testis and ovary (at protein level).

It is found in the cytoplasm. It localises to the cytoplasmic vesicle. The protein resides in the microsome. Its subcellular location is the endoplasmic reticulum. The protein localises to the cell membrane. It carries out the reaction a long-chain fatty acid + ATP + CoA = a long-chain fatty acyl-CoA + AMP + diphosphate. The enzyme catalyses (E)-hexadec-2-enoate + ATP + CoA = (2E)-hexadecenoyl-CoA + AMP + diphosphate. It catalyses the reaction hexadecanoate + ATP + CoA = hexadecanoyl-CoA + AMP + diphosphate. In terms of biological role, catalyzes the conversion of fatty acids such as long-chain and very long-chain fatty acids to their active form acyl-CoAs for both synthesis of cellular lipids, and degradation via beta-oxidation. Can activate diverse saturated, monosaturated and polyunsaturated fatty acids. The protein is Long-chain-fatty-acid--CoA ligase ACSBG1 of Mus musculus (Mouse).